The primary structure comprises 202 residues: MTSSNSNSSREVSLERKTGETDIKLSVNLDGSGAGKRDSGIGFLDHMLDLLAKHALIDLTVEAKGDLHVDDHHTAEDIGIALGTAVDRALGDRAGVRRYGHFTLPMDECLVTSAVDMGGRYAFEYNAPIAASKIGTFDSELVEHFWQSFAVNAKCNLHVLLHHGSNGHHISECVFKATARAIRMAVESDPRSDAIPSTKGVL.

Belongs to the imidazoleglycerol-phosphate dehydratase family.

It is found in the cytoplasm. The catalysed reaction is D-erythro-1-(imidazol-4-yl)glycerol 3-phosphate = 3-(imidazol-4-yl)-2-oxopropyl phosphate + H2O. It functions in the pathway amino-acid biosynthesis; L-histidine biosynthesis; L-histidine from 5-phospho-alpha-D-ribose 1-diphosphate: step 6/9. This Rhodopirellula baltica (strain DSM 10527 / NCIMB 13988 / SH1) protein is Imidazoleglycerol-phosphate dehydratase.